We begin with the raw amino-acid sequence, 257 residues long: Hydroxyethylthiazole kinase (257 aa).

Met49 contacts substrate. ATP contacts are provided by Arg124 and Thr170. Gly197 serves as a coordination point for substrate.

Belongs to the Thz kinase family. It depends on Mg(2+) as a cofactor.

The enzyme catalyses 5-(2-hydroxyethyl)-4-methylthiazole + ATP = 4-methyl-5-(2-phosphooxyethyl)-thiazole + ADP + H(+). It participates in cofactor biosynthesis; thiamine diphosphate biosynthesis; 4-methyl-5-(2-phosphoethyl)-thiazole from 5-(2-hydroxyethyl)-4-methylthiazole: step 1/1. Functionally, catalyzes the phosphorylation of the hydroxyl group of 4-methyl-5-beta-hydroxyethylthiazole (THZ). The protein is Hydroxyethylthiazole kinase of Klebsiella pneumoniae (strain 342).